We begin with the raw amino-acid sequence, 205 residues long: ATP synthase subunit b (205 aa).

Positions 1–27 are cleaved as a signal peptide; it reads MKLNKKHLVAILSVLSLSIIVVPLLTS. A lipid anchor (N-palmitoyl cysteine) is attached at Cys-28. Residue Cys-28 is the site of S-diacylglycerol cysteine attachment. Residues 48–68 form a helical membrane-spanning segment; sequence VWVFIAQVIAMCVVFSLVLWL.

The protein belongs to the ATPase B chain family. In terms of assembly, F-type ATPases have 2 components, F(1) - the catalytic core - and F(0) - the membrane proton channel. F(1) has five subunits: alpha(3), beta(3), gamma(1), delta(1), epsilon(1). F(0) has three main subunits: a(1), b(2) and c(10-14). The alpha and beta chains form an alternating ring which encloses part of the gamma chain. F(1) is attached to F(0) by a central stalk formed by the gamma and epsilon chains, while a peripheral stalk is formed by the delta and b chains.

The protein resides in the cell membrane. F(1)F(0) ATP synthase produces ATP from ADP in the presence of a proton or sodium gradient. F-type ATPases consist of two structural domains, F(1) containing the extramembraneous catalytic core and F(0) containing the membrane proton channel, linked together by a central stalk and a peripheral stalk. During catalysis, ATP synthesis in the catalytic domain of F(1) is coupled via a rotary mechanism of the central stalk subunits to proton translocation. Functionally, component of the F(0) channel, it forms part of the peripheral stalk, linking F(1) to F(0). The chain is ATP synthase subunit b from Ureaplasma parvum serovar 3 (strain ATCC 27815 / 27 / NCTC 11736).